The chain runs to 173 residues: uncharacterized protein (173 aa).

The signal sequence occupies residues 1–20; it reads MWYKVLGIVSLCSVYVSTQG. N-linked (GlcNAc...) asparagine glycosylation occurs at Asn53.

Component of the acid-insoluble organic matrix of calcified shell layers (at protein level).

Its subcellular location is the secreted. This is an uncharacterized protein from Haliotis asinina (Donkey's ear abalone).